Consider the following 712-residue polypeptide: Polyribonucleotide nucleotidyltransferase (712 aa).

Asp484 and Asp490 together coordinate Mg(2+). The region spanning 551–610 (PKVFTIQIHPDKIRDIIGPGGKVIRAIQAETGTRVDVDDSGLVKVSAVNLEEGEAALQMI) is the KH domain. Positions 620-688 (GAVYEGTVVK…KDGKIRLSRK (69 aa)) constitute an S1 motif domain. Positions 689 to 712 (ALLEEENGKSGPENGAPQRDKNRH) are disordered.

The protein belongs to the polyribonucleotide nucleotidyltransferase family. Mg(2+) serves as cofactor.

It localises to the cytoplasm. It catalyses the reaction RNA(n+1) + phosphate = RNA(n) + a ribonucleoside 5'-diphosphate. In terms of biological role, involved in mRNA degradation. Catalyzes the phosphorolysis of single-stranded polyribonucleotides processively in the 3'- to 5'-direction. The chain is Polyribonucleotide nucleotidyltransferase from Desulfatibacillum aliphaticivorans.